A 247-amino-acid polypeptide reads, in one-letter code: Adenosylcobinamide-GDP ribazoletransferase (247 aa).

5 helical membrane-spanning segments follow: residues 34-54, 59-79, 113-133, 138-158, and 194-214; these read IITF…VFMV, CGVP…TGGF, GGLA…ELTL, ILAS…LLMY, and VLLP…AIFI.

Belongs to the CobS family. Requires Mg(2+) as cofactor.

It localises to the cell inner membrane. The catalysed reaction is alpha-ribazole + adenosylcob(III)inamide-GDP = adenosylcob(III)alamin + GMP + H(+). It carries out the reaction alpha-ribazole 5'-phosphate + adenosylcob(III)inamide-GDP = adenosylcob(III)alamin 5'-phosphate + GMP + H(+). It participates in cofactor biosynthesis; adenosylcobalamin biosynthesis; adenosylcobalamin from cob(II)yrinate a,c-diamide: step 7/7. Its function is as follows. Joins adenosylcobinamide-GDP and alpha-ribazole to generate adenosylcobalamin (Ado-cobalamin). Also synthesizes adenosylcobalamin 5'-phosphate from adenosylcobinamide-GDP and alpha-ribazole 5'-phosphate. This is Adenosylcobinamide-GDP ribazoletransferase from Escherichia coli O127:H6 (strain E2348/69 / EPEC).